Here is a 1281-residue protein sequence, read N- to C-terminus: Enterobactin synthase component F (1281 aa).

An elongation/condensation region spans residues 1 to 301 (MSQHLPLVAA…NVLPLGIHIA (301 aa)). The interval 486–891 (SYREMHEQVV…ALPDVKQAVT (406 aa)) is adenylation. Residues 975-1050 (APKAGSETII…KLATIIDGEE (76 aa)) form the Carrier domain. The residue at position 1010 (S1010) is an O-(pantetheine 4'-phosphoryl)serine. Residues 1070–1281 (PTLFCFHPAS…GPIIRATLNR (212 aa)) are thioesterase. The active-site Proton acceptor; for thioesterase activity is the H1259.

The protein belongs to the ATP-dependent AMP-binding enzyme family. EntF subfamily. In terms of assembly, proteins EntB, EntD, EntE and EntF are the component of the enterobactin synthase. Components probably do not form a stable complex. EntF acts as a catalytic monomer. It depends on pantetheine 4'-phosphate as a cofactor. Post-translationally, 4'-phosphopantetheine is transferred from CoA to a specific serine of apo-EntF by EntD. Holo-EntF so formed is then acylated with seryl-AMP.

It localises to the cytoplasm. The enzyme catalyses 3 2,3-dihydroxybenzoate + 3 L-serine + 6 ATP = enterobactin + 6 AMP + 6 diphosphate + 4 H(+). It carries out the reaction holo-[peptidyl-carrier protein] + L-serine + ATP = L-seryl-[peptidyl-carrier protein] + AMP + diphosphate. It functions in the pathway siderophore biosynthesis; enterobactin biosynthesis. In terms of biological role, involved in the biosynthesis of the siderophore enterobactin (enterochelin), which is a macrocyclic trimeric lactone of N-(2,3-dihydroxybenzoyl)-serine. EntF catalyzes the activation of L-serine via ATP-dependent PPi exchange reaction to form seryladenylate. Activated L-serine is loaded onto the peptidyl carrier domain via a thioester linkage to the phosphopanthetheine moiety, forming seryl-S-Ppant-EntF. EntF acts then as the sole catalyst for the formation of the three amide and three ester linkages found in enterobactin, using seryladenylate and 2,3-dihydroxybenzoate-S-Ppant-EntB (DHB-S-Ppant-EntB) as substrates, via the formation of a DHB-Ser-S-Ppant-EntF intermediate. This is Enterobactin synthase component F (entF) from Shigella flexneri.